Reading from the N-terminus, the 309-residue chain is Dihydroorotate dehydrogenase B (NAD(+)), catalytic subunit (309 aa).

Residues S21 and 45 to 46 (KA) contribute to the FMN site. Substrate contacts are provided by residues K45 and 69–73 (NAIGL). FMN is bound by residues N99 and N127. Residue N127 participates in substrate binding. C130 serves as the catalytic Nucleophile. Residues K165 and I191 each contribute to the FMN site. 192–193 (NT) contributes to the substrate binding site. FMN contacts are provided by residues G217, 243-244 (GG), and 265-266 (GT).

This sequence belongs to the dihydroorotate dehydrogenase family. Type 1 subfamily. In terms of assembly, heterotetramer of 2 PyrK and 2 PyrD type B subunits. FMN is required as a cofactor.

It is found in the cytoplasm. It carries out the reaction (S)-dihydroorotate + NAD(+) = orotate + NADH + H(+). The protein operates within pyrimidine metabolism; UMP biosynthesis via de novo pathway; orotate from (S)-dihydroorotate (NAD(+) route): step 1/1. Functionally, catalyzes the conversion of dihydroorotate to orotate with NAD(+) as electron acceptor. This Bacillus mycoides (strain KBAB4) (Bacillus weihenstephanensis) protein is Dihydroorotate dehydrogenase B (NAD(+)), catalytic subunit (pyrD).